Here is a 422-residue protein sequence, read N- to C-terminus: GTPase Obg (422 aa).

Residues 1-158 form the Obg domain; it reads MFYDRAKIYV…LWLELELKVI (158 aa). The region spanning 159 to 330 is the OBG-type G domain; that stretch reads ADVGLIGFPN…VIHRVAELLA (172 aa). Residues 165–172, 190–194, 212–215, 282–285, and 311–313 contribute to the GTP site; these read GFPNAGKS, FTTLV, DIPG, NKMD, and SAA. Residues Ser-172 and Thr-192 each contribute to the Mg(2+) site. Positions 344 to 422 constitute an OCT domain; that stretch reads VMFEPEERFN…IGDWEFEWSE (79 aa).

Belongs to the TRAFAC class OBG-HflX-like GTPase superfamily. OBG GTPase family. As to quaternary structure, monomer. Requires Mg(2+) as cofactor.

It localises to the cytoplasm. Its function is as follows. An essential GTPase which binds GTP, GDP and possibly (p)ppGpp with moderate affinity, with high nucleotide exchange rates and a fairly low GTP hydrolysis rate. Plays a role in control of the cell cycle, stress response, ribosome biogenesis and in those bacteria that undergo differentiation, in morphogenesis control. In Desulforamulus reducens (strain ATCC BAA-1160 / DSM 100696 / MI-1) (Desulfotomaculum reducens), this protein is GTPase Obg.